The primary structure comprises 60 residues: Large ribosomal subunit protein uL30 (60 aa).

This sequence belongs to the universal ribosomal protein uL30 family. Part of the 50S ribosomal subunit.

In Clavibacter michiganensis subsp. michiganensis (strain NCPPB 382), this protein is Large ribosomal subunit protein uL30.